Here is an 85-residue protein sequence, read N- to C-terminus: Small ribosomal subunit protein uS17 (85 aa).

This sequence belongs to the universal ribosomal protein uS17 family. Part of the 30S ribosomal subunit.

One of the primary rRNA binding proteins, it binds specifically to the 5'-end of 16S ribosomal RNA. In Geobacter metallireducens (strain ATCC 53774 / DSM 7210 / GS-15), this protein is Small ribosomal subunit protein uS17.